The chain runs to 349 residues: S-adenosylmethionine decarboxylase proenzyme 3 (349 aa).

Residues Glu9 and Glu12 contribute to the active site. Glu68 provides a ligand contact to substrate. Catalysis depends on Ser69, which acts as the Schiff-base intermediate with substrate; via pyruvic acid. Position 69 is a pyruvic acid (Ser); by autocatalysis (Ser69). Cys83 acts as the Proton donor; for catalytic activity in catalysis. Active-site proton acceptor; for processing activity residues include Ser235 and His248. Residue Glu252 coordinates substrate.

Belongs to the eukaryotic AdoMetDC family. Requires pyruvate as cofactor. Is synthesized initially as an inactive proenzyme. Formation of the active enzyme involves a self-maturation process in which the active site pyruvoyl group is generated from an internal serine residue via an autocatalytic post-translational modification. Two non-identical subunits are generated from the proenzyme in this reaction, and the pyruvate is formed at the N-terminus of the alpha chain, which is derived from the carboxyl end of the proenzyme. The post-translation cleavage follows an unusual pathway, termed non-hydrolytic serinolysis, in which the side chain hydroxyl group of the serine supplies its oxygen atom to form the C-terminus of the beta chain, while the remainder of the serine residue undergoes an oxidative deamination to produce ammonia and the pyruvoyl group blocking the N-terminus of the alpha chain.

It catalyses the reaction S-adenosyl-L-methionine + H(+) = S-adenosyl 3-(methylsulfanyl)propylamine + CO2. It functions in the pathway amine and polyamine biosynthesis; S-adenosylmethioninamine biosynthesis; S-adenosylmethioninamine from S-adenosyl-L-methionine: step 1/1. In terms of biological role, essential for biosynthesis of the polyamines spermidine and spermine. Essential for polyamine homeostasis, and normal plant embryogenesis, growth and development. This Arabidopsis thaliana (Mouse-ear cress) protein is S-adenosylmethionine decarboxylase proenzyme 3.